Consider the following 469-residue polypeptide: Nuclear hormone receptor family member nhr-154 (469 aa).

A DNA-binding region (nuclear receptor) is located at residues 80 to 159; the sequence is PSKCLVCRNP…VGMNPMAIQA (80 aa). 2 consecutive NR C4-type zinc fingers follow at residues 83-103 and 119-142; these read CLVC…CNGC and CAKQ…CRAC. One can recognise an NR LBD domain in the interval 230–459; the sequence is LDSKPVLVVT…KMGTTFRKCI (230 aa).

Belongs to the nuclear hormone receptor family.

It localises to the nucleus. Functionally, orphan nuclear receptor. This Caenorhabditis elegans protein is Nuclear hormone receptor family member nhr-154 (nhr-154).